We begin with the raw amino-acid sequence, 357 residues long: Putative diaminopimelate epimerase, chloroplastic (357 aa).

A chloroplast-targeting transit peptide spans 1–47; sequence MSSATAAATATIAAAAAAAAKLAATPAPAPSRRRLTLRGNPTARRCV. Residues Cys145 and Cys300 contribute to the active site.

Belongs to the diaminopimelate epimerase family.

The protein resides in the plastid. It is found in the chloroplast. The catalysed reaction is (2S,6S)-2,6-diaminopimelate = meso-2,6-diaminopimelate. It functions in the pathway amino-acid biosynthesis; L-lysine biosynthesis via DAP pathway; DL-2,6-diaminopimelate from LL-2,6-diaminopimelate: step 1/1. In Oryza sativa subsp. indica (Rice), this protein is Putative diaminopimelate epimerase, chloroplastic (DAPF).